Reading from the N-terminus, the 93-residue chain is uncharacterized protein (93 aa).

A run of 2 helical transmembrane segments spans residues 8–28 (FIGIVKDILVLIASFGILLAS) and 54–74 (ACFLIFIALGETLLAFVYLIL).

The protein localises to the cell membrane. This is an uncharacterized protein from Methanocaldococcus jannaschii (strain ATCC 43067 / DSM 2661 / JAL-1 / JCM 10045 / NBRC 100440) (Methanococcus jannaschii).